The sequence spans 263 residues: Endonuclease 8 (263 aa).

The active-site Schiff-base intermediate with DNA is Pro2. Glu3 serves as the catalytic Proton donor. Lys53 functions as the Proton donor; for beta-elimination activity in the catalytic mechanism. Residues Gln70, Arg125, and Asn169 each coordinate DNA. Residues 229 to 263 (KVFHREGESCERCGGTIERTMLSSRPFYWCPHCQS) form an FPG-type zinc finger. Catalysis depends on Arg253, which acts as the Proton donor; for delta-elimination activity.

The protein belongs to the FPG family. Zn(2+) serves as cofactor.

It catalyses the reaction 2'-deoxyribonucleotide-(2'-deoxyribose 5'-phosphate)-2'-deoxyribonucleotide-DNA = a 3'-end 2'-deoxyribonucleotide-(2,3-dehydro-2,3-deoxyribose 5'-phosphate)-DNA + a 5'-end 5'-phospho-2'-deoxyribonucleoside-DNA + H(+). In terms of biological role, involved in base excision repair of DNA damaged by oxidation or by mutagenic agents. Acts as a DNA glycosylase that recognizes and removes damaged bases. Has a preference for oxidized pyrimidines, such as thymine glycol, 5,6-dihydrouracil and 5,6-dihydrothymine. Has AP (apurinic/apyrimidinic) lyase activity and introduces nicks in the DNA strand. Cleaves the DNA backbone by beta-delta elimination to generate a single-strand break at the site of the removed base with both 3'- and 5'-phosphates. This Pectobacterium atrosepticum (strain SCRI 1043 / ATCC BAA-672) (Erwinia carotovora subsp. atroseptica) protein is Endonuclease 8.